The primary structure comprises 437 residues: UDP-N-acetylmuramate--L-alanine ligase (437 aa).

108 to 114 (GAHGKTS) is an ATP binding site.

It belongs to the MurCDEF family.

Its subcellular location is the cytoplasm. It carries out the reaction UDP-N-acetyl-alpha-D-muramate + L-alanine + ATP = UDP-N-acetyl-alpha-D-muramoyl-L-alanine + ADP + phosphate + H(+). Its pathway is cell wall biogenesis; peptidoglycan biosynthesis. Cell wall formation. This Lysinibacillus sphaericus (strain C3-41) protein is UDP-N-acetylmuramate--L-alanine ligase.